The following is a 1393-amino-acid chain: MEKQRREESSFQQPPWIPQTPMKPFSPICPYTVEDQYHSSQLEERRFVGNKDMSGLDHLSFGDLLALANTASLIFSGQTPIPTRNTEVMQKGTEEVESLSSVSNNVAEQILKTPEKPKRKKHRPKVRREAKPKREPKPRAPRKSVVTDGQESKTPKRKYVRKKVEVSKDQDATPVESSAAVETSTRPKRLCRRVLDFEAENGENQTNGDIREAGEMESALQEKQLDSGNQELKDCLLSAPSTPKRKRSQGKRKGVQPKKNGSNLEEVDISMAQAAKRRQGPTCCDMNLSGIQYDEQCDYQKMHWLYSPNLQQGGMRYDAICSKVFSGQQHNYVSAFHATCYSSTSQLSANRVLTVEERREGIFQGRQESELNVLSDKIDTPIKKKTTGHARFRNLSSMNKLVEVPEHLTSGYCSKPQQNNKILVDTRVTVSKKKPTKSEKSQTKQKNLLPNLCRFPPSFTGLSPDELWKRRNSIETISELLRLLDINREHSETALVPYTMNSQIVLFGGGAGAIVPVTPVKKPRPRPKVDLDDETDRVWKLLLENINSEGVDGSDEQKAKWWEEERNVFRGRADSFIARMHLVQGDRRFTPWKGSVVDSVVGVFLTQNVSDHLSSSAFMSLASQFPVPFVPSSNFDAGTSSMPSIQITYLDSEETMSSPPDHNHSSVTLKNTQPDEEKDYVPSNETSRSSSEIAISAHESVDKTTDSKEYVDSDRKGSSVEVDKTDEKCRVLNLFPSEDSALTCQHSMVSDAPQNTERAGSSSEIDLEGEYRTSFMKLLQGVQVSLEDSNQVSPNMSPGDCSSEIKGFQSMKEPTKSSVDSSEPGCCSQQDGDVLSCQKPTLKEKGKKVLKEEKKAFDWDCLRREAQARAGIREKTRSTMDTVDWKAIRAADVKEVAETIKSRGMNHKLAERIQGFLDRLVNDHGSIDLEWLRDVPPDKAKEYLLSFNGLGLKSVECVRLLTLHHLAFPVDTNVGRIAVRLGWVPLQPLPESLQLHLLEMYPMLESIQKYLWPRLCKLDQKTLYELHYQMITFGKVFCTKSKPNCNACPMKGECRHFASAFASARLALPSTEKGMGTPDKNPLPLHLPEPFQREQGSEVVQHSEPAKKVTCCEPIIEEPASPEPETAEVSIADIEEAFFEDPEEIPTIRLNMDAFTSNLKKIMEHNKELQDGNMSSALVALTAETASLPMPKLKNISQLRTEHRVYELPDEHPLLAQLEKREPDDPCSYLLAIWTPGETADSIQPSVSTCIFQANGMLCDEETCFSCNSIKETRSQIVRGTILIPCRTAMRGSFPLNGTYFQVNEVFADHASSLNPINVPRELIWELPRRTVYFGTSVPTIFKGLSTEKIQACFWKGYVCVRGFDRKTRGPKPLIARLHFPASKLKGQQANLA.

3 disordered regions span residues 1–25 (MEKQRREESSFQQPPWIPQTPMKPF), 98–186 (SLSS…TSTR), and 237–265 (LSAPSTPKRKRSQGKRKGVQPKKNGSNLE). A compositionally biased stretch (low complexity) spans 98 to 108 (SLSSVSNNVAE). Over residues 117-126 (PKRKKHRPKV) the composition is skewed to basic residues. Basic and acidic residues-rich tracts occupy residues 127-138 (RREAKPKREPKP) and 162-171 (KKVEVSKDQD). A compositionally biased stretch (basic residues) spans 243–256 (PKRKRSQGKRKGVQ). A DEMETER region spans residues 528–626 (KVDLDDETDR…AFMSLASQFP (99 aa)). The span at 653-672 (EETMSSPPDHNHSSVTLKNT) shows a compositional bias: polar residues. Disordered regions lie at residues 653-722 (EETM…SVEV) and 789-830 (SNQV…CSQQ). The span at 687 to 698 (SRSSSEIAISAH) shows a compositional bias: low complexity. Positions 699 to 722 (ESVDKTTDSKEYVDSDRKGSSVEV) are enriched in basic and acidic residues. Polar residues predominate over residues 816-830 (KSSVDSSEPGCCSQQ). Lys-901 participates in a covalent cross-link: Glycyl lysine isopeptide (Lys-Gly) (interchain with G-Cter in ubiquitin). [4Fe-4S] cluster contacts are provided by Cys-1038, Cys-1045, Cys-1048, and Cys-1054.

It belongs to the DNA glycosylase family. DEMETER subfamily. Interacts (via the central region) with ZDP. Binds to RPA2A. Interacts with XRCC1. Interacts probably with a complex made of MBD7, IDM1, IDM2 and IDM3. Interacts with APE1L. Requires [4Fe-4S] cluster as cofactor. In terms of tissue distribution, expressed ubiquitously in both vegetative and reproductive organs.

It is found in the nucleus. It localises to the nucleolus. The enzyme catalyses 2'-deoxyribonucleotide-(2'-deoxyribose 5'-phosphate)-2'-deoxyribonucleotide-DNA = a 3'-end 2'-deoxyribonucleotide-(2,3-dehydro-2,3-deoxyribose 5'-phosphate)-DNA + a 5'-end 5'-phospho-2'-deoxyribonucleoside-DNA + H(+). Stimulated by ZDP. Stimulated by XRCC1. Bifunctional DNA glycosylase/lyase, which excises 5-methylcytosine (5-meC) and 5-hydroxymethylcytosine (5-hmeC), leaving an apyrimidinic (AP) site that is subsequently incised by the lyase activity. Generates 3'-phosphor-alpha,beta-unsaturated aldehyde (3'-PUA) as a primary 5-meC excision intermediate. Prevents DNA hypermethylation, specifically in the promoter of otherwise silenced loci. May be involved in DNA repair through its nicking activity on methylated DNA. Binds with similar affinity to both methylated and non-methylated DNA. Highly distributive behavior on DNA substrates containing multiple 5-meC residues. Involved with Pol IV in the remodeling of the 5S rDNA chromatin via DNA methylation modifications during the first days of development post-germination. Participates in UV-B induced- and oxidative DNA damage repair. The chain is DNA glycosylase/AP lyase ROS1 from Arabidopsis thaliana (Mouse-ear cress).